The primary structure comprises 91 residues: Cytochrome b-c1 complex subunit 6, mitochondrial (91 aa).

The N-terminal 13 residues, 1-13, are a transit peptide targeting the mitochondrion; that stretch reads MGLEDEQRMLTGS. A disordered region spans residues 1-30; it reads MGLEDEQRMLTGSGDPKEEEEEEEELVDPL. Residues 17 to 27 show a composition bias toward acidic residues; it reads KEEEEEEEELV. Intrachain disulfides connect cysteine 37/cysteine 81 and cysteine 53/cysteine 67. Residue lysine 42 is modified to N6-acetyllysine. An N6-acetyllysine modification is found at lysine 85.

The protein belongs to the UQCRH/QCR6 family. In terms of assembly, component of the ubiquinol-cytochrome c oxidoreductase (cytochrome b-c1 complex, complex III, CIII), a multisubunit enzyme composed of 11 subunits. The complex is composed of 3 respiratory subunits cytochrome b, cytochrome c1 and Rieske protein UQCRFS1, 2 core protein subunits UQCRC1/QCR1 and UQCRC2/QCR2, and 6 low-molecular weight protein subunits UQCRH/QCR6, UQCRB/QCR7, UQCRQ/QCR8, UQCR10/QCR9, UQCR11/QCR10 and subunit 9, the cleavage product of Rieske protein UQCRFS1. The complex exists as an obligatory dimer and forms supercomplexes (SCs) in the inner mitochondrial membrane with NADH-ubiquinone oxidoreductase (complex I, CI) and cytochrome c oxidase (complex IV, CIV), resulting in different assemblies (supercomplex SCI(1)III(2)IV(1) and megacomplex MCI(2)III(2)IV(2)).

The protein localises to the mitochondrion inner membrane. Its function is as follows. Component of the ubiquinol-cytochrome c oxidoreductase, a multisubunit transmembrane complex that is part of the mitochondrial electron transport chain which drives oxidative phosphorylation. The respiratory chain contains 3 multisubunit complexes succinate dehydrogenase (complex II, CII), ubiquinol-cytochrome c oxidoreductase (cytochrome b-c1 complex, complex III, CIII) and cytochrome c oxidase (complex IV, CIV), that cooperate to transfer electrons derived from NADH and succinate to molecular oxygen, creating an electrochemical gradient over the inner membrane that drives transmembrane transport and the ATP synthase. The cytochrome b-c1 complex catalyzes electron transfer from ubiquinol to cytochrome c, linking this redox reaction to translocation of protons across the mitochondrial inner membrane, with protons being carried across the membrane as hydrogens on the quinol. In the process called Q cycle, 2 protons are consumed from the matrix, 4 protons are released into the intermembrane space and 2 electrons are passed to cytochrome c. The protein is Cytochrome b-c1 complex subunit 6, mitochondrial (UQCRH) of Bos taurus (Bovine).